Reading from the N-terminus, the 220-residue chain is MPNVDDSVMGRQMPSSFDENHEFYNEKPMAKIFRKLREEPLIPLGAGLTVFAFTQAWRPMRRGDQVSANKMFRARVAAQGFTVLAMIAGSMYYNKDREATKELRKLKEERDSEEKRQKWIRELEIRDEEDKAMRARVMNRRAKAEEAKAGNASATPAEGGEAKSGVLNALGLSGSSSGWGKPGEAPLADASKAVDDEPIVSKVKTPTNVKRVSAEDDKTN.

Residues 13–104 (MPSSFDENHE…KDREATKELR (92 aa)) form the HIG1 domain. 2 consecutive transmembrane segments (helical) span residues 41–57 (LIPL…TQAW) and 76–93 (VAAQ…SMYY). The stretch at 91–145 (MYYNKDREATKELRKLKEERDSEEKRQKWIRELEIRDEEDKAMRARVMNRRAKAE) forms a coiled coil. Residues 139-220 (NRRAKAEEAK…RVSAEDDKTN (82 aa)) are disordered. Positions 164-179 (SGVLNALGLSGSSSGW) are enriched in low complexity.

Belongs to the RCF1 family. Associates with the respiratory chain complex III/complex IV supercomplex.

The protein localises to the mitochondrion membrane. In terms of biological role, cytochrome c oxidase subunit which plays a role in assembly of respiratory supercomplexes. This is Respiratory supercomplex factor 1, mitochondrial (RCF1) from Verticillium alfalfae (strain VaMs.102 / ATCC MYA-4576 / FGSC 10136) (Verticillium wilt of alfalfa).